The sequence spans 314 residues: BCL2/adenovirus E1B 19 kDa protein-interacting protein 2 (314 aa).

The segment at 1–21 (MEGVELKEEWQDEDFPIPLPE) is disordered. Positions 10-21 (WQDEDFPIPLPE) are enriched in acidic residues. Phosphoserine occurs at positions 41 and 77. The tract at residues 76 to 100 (ESGEIDLDGLDTPSENSNEFEWEDD) is disordered. Thr-87 bears the Phosphothreonine mark. Residues Ser-89, Ser-92, and Ser-114 each carry the phosphoserine modification. The region spanning 147–304 (IEPYKKVISH…CIKQVDQELN (158 aa)) is the CRAL-TRIO domain.

It localises to the cytoplasm. It is found in the perinuclear region. In terms of biological role, implicated in the suppression of cell death. Interacts with the BCL-2 and adenovirus E1B 19 kDa proteins. The protein is BCL2/adenovirus E1B 19 kDa protein-interacting protein 2 (BNIP2) of Homo sapiens (Human).